We begin with the raw amino-acid sequence, 432 residues long: Adenylosuccinate synthetase (432 aa).

Residues 13 to 19 (GDEGKGK) and 41 to 43 (GHT) contribute to the GTP site. D14 serves as the catalytic Proton acceptor. The Mg(2+) site is built by D14 and G41. IMP-binding positions include 14–17 (DEGK), 39–42 (NAGH), T130, R144, Q225, T240, and R304. Catalysis depends on H42, which acts as the Proton donor. 300–306 (ATTGRKR) is a binding site for substrate. Residues R306, 332-334 (KLD), and 415-417 (STG) contribute to the GTP site.

The protein belongs to the adenylosuccinate synthetase family. As to quaternary structure, homodimer. The cofactor is Mg(2+).

It is found in the cytoplasm. It catalyses the reaction IMP + L-aspartate + GTP = N(6)-(1,2-dicarboxyethyl)-AMP + GDP + phosphate + 2 H(+). Its pathway is purine metabolism; AMP biosynthesis via de novo pathway; AMP from IMP: step 1/2. Plays an important role in the de novo pathway of purine nucleotide biosynthesis. Catalyzes the first committed step in the biosynthesis of AMP from IMP. In Tolumonas auensis (strain DSM 9187 / NBRC 110442 / TA 4), this protein is Adenylosuccinate synthetase.